The following is a 686-amino-acid chain: Proprotein convertase subtilisin/kexin type 9 (686 aa).

The signal sequence occupies residues 1–28 (MGTVSSRRLWWPLPLLLLLLLGPAGTRA). Positions 29–150 (QEDDDDDYEE…IEEDSSVFAQ (122 aa)) are excised as a propeptide. Y36 bears the Sulfotyrosine mark. Phosphoserine is present on S45. One can recognise an Inhibitor I9 domain in the interval 75–147 (TYVVVLKEET…VDYIEEDSSV (73 aa)). Residues 153–459 (PWNLERITPA…GWQLFCRTVW (307 aa)) form the Peptidase S8 domain. Residues D184 and H224 each act as charge relay system in the active site. 2 cysteine pairs are disulfide-bonded: C221–C253 and C321–C356. Catalysis depends on S384, which acts as the Charge relay system. The interval 448-686 (GEGWQLFCRT…CRSQHLAQAS (239 aa)) is C-terminal domain. 3 disulfides stabilise this stretch: C455–C525, C475–C524, and C484–C507. N531 carries an N-linked (GlcNAc...) asparagine glycan. 6 disulfides stabilise this stretch: C532–C599, C550–C598, C560–C586, C606–C677, C624–C676, and C633–C652. S686 is modified (phosphoserine).

This sequence belongs to the peptidase S8 family. In terms of assembly, monomer. Can self-associate to form dimers and higher multimers which may have increased LDLR degrading activity. The precursor protein but not the mature protein may form multimers. Interacts with APOB, VLDLR, LRP8/APOER2 and BACE1. The full-length immature form (pro-PCSK9) interacts with SCNN1A, SCNN1B and SCNN1G. The pro-PCSK9 form (via C-terminal domain) interacts with LDLR. Interacts (via the C-terminal domain) with ANXA2 (via repeat Annexin 1); the interaction inhibits the degradation of LDLR. Ca(2+) is required as a cofactor. Post-translationally, cleavage by furin and PCSK5 generates a truncated inactive protein that is unable to induce LDLR degradation. Undergoes autocatalytic cleavage in the endoplasmic reticulum to release the propeptide from the N-terminus and the cleavage of the propeptide is strictly required for its maturation and activation. The cleaved propeptide however remains associated with the catalytic domain through non-covalent interactions, preventing potential substrates from accessing its active site. As a result, it is secreted from cells as a propeptide-containing, enzymatically inactive protein. In terms of processing, phosphorylation protects the propeptide against proteolysis.

The protein localises to the cytoplasm. The protein resides in the secreted. Its subcellular location is the endosome. It is found in the lysosome. It localises to the cell surface. The protein localises to the endoplasmic reticulum. The protein resides in the golgi apparatus. With respect to regulation, its proteolytic activity is autoinhibited by the non-covalent binding of the propeptide to the catalytic domain. Inhibited by EGTA. Functionally, crucial player in the regulation of plasma cholesterol homeostasis. Binds to low-density lipid receptor family members: low density lipoprotein receptor (LDLR), very low density lipoprotein receptor (VLDLR), apolipoprotein E receptor (LRP1/APOER) and apolipoprotein receptor 2 (LRP8/APOER2), and promotes their degradation in intracellular acidic compartments. Acts via a non-proteolytic mechanism to enhance the degradation of the hepatic LDLR through a clathrin LDLRAP1/ARH-mediated pathway. May prevent the recycling of LDLR from endosomes to the cell surface or direct it to lysosomes for degradation. Can induce ubiquitination of LDLR leading to its subsequent degradation. Inhibits intracellular degradation of APOB via the autophagosome/lysosome pathway in a LDLR-independent manner. Involved in the disposal of non-acetylated intermediates of BACE1 in the early secretory pathway. Inhibits epithelial Na(+) channel (ENaC)-mediated Na(+) absorption by reducing ENaC surface expression primarily by increasing its proteasomal degradation. Regulates neuronal apoptosis via modulation of LRP8/APOER2 levels and related anti-apoptotic signaling pathways. The polypeptide is Proprotein convertase subtilisin/kexin type 9 (PCSK9) (Saguinus labiatus (Red-chested mustached tamarin)).